A 298-amino-acid polypeptide reads, in one-letter code: Putative S-adenosyl-L-methionine-dependent methyltransferase MAV_0778 (298 aa).

S-adenosyl-L-methionine-binding positions include aspartate 124 and 153-154 (DL).

It belongs to the UPF0677 family.

In terms of biological role, exhibits S-adenosyl-L-methionine-dependent methyltransferase activity. The sequence is that of Putative S-adenosyl-L-methionine-dependent methyltransferase MAV_0778 from Mycobacterium avium (strain 104).